The following is a 484-amino-acid chain: Auxin transporter-like protein 2 (484 aa).

At 1–59 the chain is on the cytoplasmic side; sequence MLPQKQGEEAIVSSFNETDQQEGVVGREEEVEDHSFSVKNFLWHGGSVWDAWFSCASNQ. A helical transmembrane segment spans residues 60–77; the sequence is VAQVLLTLPYSFSQLGML. Residues 78-79 lie on the Extracellular side of the membrane; sequence SG. A helical membrane pass occupies residues 80–100; that stretch reads ILLQVFYGILGSWTAYLISVL. Over 101–135 the chain is Cytoplasmic; sequence YVEYRSRKEKENVNFKNHVIQWFEVLDGLLGPYWK. A helical transmembrane segment spans residues 136 to 156; that stretch reads ALGLAFNCTFLLFGSVIQLIA. Residues 157 to 172 lie on the Extracellular side of the membrane; it reads CASNIYYINDNLDKRT. Residues 173 to 193 form a helical membrane-spanning segment; sequence WTYIFGACCATTVFIPSFHNY. The Cytoplasmic portion of the chain corresponds to 194–196; the sequence is RIW. Residues 197 to 217 form a helical membrane-spanning segment; that stretch reads SFLGLGMTTYTAWYLTIASIV. The Extracellular segment spans residues 218–232; sequence HGQAENVTHTGPKKL. N-linked (GlcNAc...) asparagine glycosylation is present at Asn-223. Residues 233–253 traverse the membrane as a helical segment; the sequence is VLYFTGATNILYTFGGHAVTV. The Cytoplasmic segment spans residues 254–266; the sequence is EIMHAMWKPQKFK. The chain crosses the membrane as a helical span at residues 267 to 287; that stretch reads YIYLMATLYVFTLTIPSATAV. At 288 to 314 the chain is on the extracellular side; sequence YWAFGDELLNHSNAFSLLPKNGWRDGA. An N-linked (GlcNAc...) asparagine glycan is attached at Asn-297. The chain crosses the membrane as a helical span at residues 315-335; the sequence is VILMLIHQFITFGFACTPLYF. Residues 336 to 356 are Cytoplasmic-facing; sequence VWEKVIGMHDTRSICLRALAR. Residues 357–377 traverse the membrane as a helical segment; it reads LPVVIPIWFLAIIFPFFGPIN. Residue Ser-378 is a topological domain, extracellular. The chain crosses the membrane as a helical span at residues 379-399; that stretch reads AVGALLVSFTVYIIPSAAHML. Topologically, residues 400-425 are cytoplasmic; it reads TYRKASARKNAAEKPPFFMPSWTAMY. Residues 426–446 form a helical membrane-spanning segment; that stretch reads IFNAFIVIWVLVVGFGFGGWA. Residues 447-484 are Extracellular-facing; the sequence is SMTNFIRQIDTFGLFAKCYQCKPPPVMAAAPPPHALHH.

Belongs to the amino acid/polyamine transporter 2 family. Amino acid/auxin permease (AAAP) (TC 2.A.18.1) subfamily. In terms of tissue distribution, shoots and roots of nodulating plants. Higher levels in roots, flowers and stems, lower in nodules, leaves, petioles and shoot apices.

Its subcellular location is the cell membrane. In terms of biological role, carrier protein involved in proton-driven auxin influx. Mediates the formation of auxin gradient from developing leaves (site of auxin biosynthesis) to tips by contributing to the loading of auxin in vascular tissues and facilitating acropetal (base to tip) auxin transport within inner tissues of the root apex, and basipetal (tip to base) auxin transport within outer tissues of the root apex. May be involved in lateral roots and nodules formation. In Medicago truncatula (Barrel medic), this protein is Auxin transporter-like protein 2 (LAX2).